Here is a 73-residue protein sequence, read N- to C-terminus: MERKTLASLCFFLIVLLAAQVVAQIVPCKTRNRNFKSACIAVSGDNEECDHDCRRVGGWYGGSCKNQKCVCDC.

Positions 1–23 are cleaved as a signal peptide; sequence MERKTLASLCFFLIVLLAAQVVA. 3 disulfides stabilise this stretch: Cys39–Cys64, Cys49–Cys71, and Cys53–Cys73.

In terms of tissue distribution, expressed in nodules, but not in leaves, stems, flowers and roots. In developing nodules, expressed close to the infection threads.

Its subcellular location is the secreted. In terms of biological role, nodulation-related protein probably involved in the infection process. This chain is Nodulin-1 (N1), found in Medicago truncatula (Barrel medic).